The sequence spans 329 residues: 4-hydroxythreonine-4-phosphate dehydrogenase (329 aa).

Residues His-136 and Thr-137 each contribute to the substrate site. A divalent metal cation is bound by residues His-166, His-211, and His-266. Residues Lys-274, Asn-283, and Arg-292 each coordinate substrate.

The protein belongs to the PdxA family. Homodimer. Zn(2+) serves as cofactor. Requires Mg(2+) as cofactor. Co(2+) is required as a cofactor.

The protein localises to the cytoplasm. It carries out the reaction 4-(phosphooxy)-L-threonine + NAD(+) = 3-amino-2-oxopropyl phosphate + CO2 + NADH. The protein operates within cofactor biosynthesis; pyridoxine 5'-phosphate biosynthesis; pyridoxine 5'-phosphate from D-erythrose 4-phosphate: step 4/5. Functionally, catalyzes the NAD(P)-dependent oxidation of 4-(phosphooxy)-L-threonine (HTP) into 2-amino-3-oxo-4-(phosphooxy)butyric acid which spontaneously decarboxylates to form 3-amino-2-oxopropyl phosphate (AHAP). This chain is 4-hydroxythreonine-4-phosphate dehydrogenase, found in Shigella dysenteriae serotype 1 (strain Sd197).